The primary structure comprises 79 residues: Sulfur carrier protein TusA (79 aa).

The Cysteine persulfide intermediate role is filled by cysteine 17.

The protein belongs to the sulfur carrier protein TusA family.

The protein resides in the cytoplasm. Its function is as follows. Sulfur carrier protein which probably makes part of a sulfur-relay system. The chain is Sulfur carrier protein TusA from Haemophilus ducreyi (strain 35000HP / ATCC 700724).